Reading from the N-terminus, the 199-residue chain is Recombination protein RecR (199 aa).

Residues 58 to 73 (CVNCGNIGTGDLCEIC) form a C4-type zinc finger. The Toprim domain occupies 81 to 176 (GEICVVEDVA…TLSSLAQGVP (96 aa)).

Belongs to the RecR family.

May play a role in DNA repair. It seems to be involved in an RecBC-independent recombinational process of DNA repair. It may act with RecF and RecO. The sequence is that of Recombination protein RecR from Jannaschia sp. (strain CCS1).